We begin with the raw amino-acid sequence, 876 residues long: GRB2-associated and regulator of MAPK protein (876 aa).

A CABIT region spans residues 12 to 320; the sequence is KDVKWSPVAM…HQVKGDMWPE (309 aa). Position 105 is a phosphotyrosine (Tyr-105). The interval 427-448 is disordered; the sequence is GDSGSDYLFPEANEESAGIPGK. Tyr-453 carries the post-translational modification Phosphotyrosine. 2 disordered regions span residues 460–501 and 530–572; these read EGKP…ATLG and LNAP…SYYS. The necessary for interaction with GRB2 stretch occupies residues 498–550; sequence ATLGATIKSSEIALPPPPVPPKSEAVREECRLLNAPPVPPRSAKPLSTSPSIP. Polar residues predominate over residues 560–572; that stretch reads QTRSPSPTLSYYS. A phosphoserine mark is found at Ser-609 and Ser-613. 2 stretches are compositionally biased toward polar residues: residues 630–639 and 647–657; these read SGASENQTRS and RSYSYPRQKTP. Disordered regions lie at residues 630 to 664 and 722 to 759; these read SGASENQTRSDFLLDPSRSYSYPRQKTPGTPKRTC and CPALPPRAPKPVEQKATPETSPLPLKIDGAEEDPTAGS. The SAM domain maps to 811–876; it reads LSIEEVSKSL…QFINGWRPKI (66 aa).

It belongs to the GAREM family. As to quaternary structure, interacts with EGFR. Interacts (via proline-rich domain and phosphorylated at Tyr-105 and Tyr-453) with GRB2 (via SH3 domains); the interaction occurs upon EGF stimulation. Interacts (phosphorylated at Tyr-453) with PTPN11; the interaction increases MAPK/ERK activity and does not affect the GRB2/SOS complex formation. Post-translationally, on EGF stimulation, phosphorylated on Tyr-105 and Tyr-453.

Its function is as follows. Acts as an adapter protein that plays a role in intracellular signaling cascades triggered either by the cell surface activated epidermal growth factor receptor and/or cytoplasmic protein tyrosine kinases. Promotes activation of the MAPK/ERK signaling pathway. Plays a role in the regulation of cell proliferation. The polypeptide is GRB2-associated and regulator of MAPK protein (Garem1) (Mus musculus (Mouse)).